The following is a 1129-amino-acid chain: A-kinase anchor protein 11 (1129 aa).

A compositionally biased stretch (basic residues) spans methionine 1 to leucine 12. Residues methionine 1–glutamine 21 form a disordered region. 2 positions are modified to phosphothreonine: threonine 251 and threonine 363. 3 disordered regions span residues isoleucine 354–serine 376, glutamate 394–glutamate 416, and serine 434–serine 455. Over residues proline 404–glutamate 416 the composition is skewed to polar residues. 3 positions are modified to phosphoserine: serine 434, serine 439, and serine 440. The segment covering glycine 442–serine 455 has biased composition (basic and acidic residues). Phosphoserine is present on serine 595. Threonine 742 carries the phosphothreonine modification. Phosphoserine is present on serine 835. Residues leucine 905–glutamate 918 form a PKA-RII binding region region. A disordered region spans residues serine 962–proline 1061. Residues phenylalanine 968–serine 995 are compositionally biased toward polar residues. Over residues aspartate 1002–serine 1011 the composition is skewed to basic and acidic residues. The segment covering glutamate 1012 to glycine 1028 has biased composition (low complexity). Residues asparagine 1033–serine 1042 are compositionally biased toward polar residues. A compositionally biased stretch (acidic residues) spans aspartate 1043–alanine 1056.

As to expression, expressed in brain and testis.

The protein resides in the peroxisome. In terms of biological role, binds to type II regulatory subunits of protein kinase A and anchors/targets them. This chain is A-kinase anchor protein 11 (Akap11), found in Rattus norvegicus (Rat).